Reading from the N-terminus, the 237-residue chain is rRNA-processing protein EFG1 (237 aa).

Residues 1-24 are disordered; sequence MPKTVKNPKNNKSRSRGAPIQVAE. Coiled-coil stretches lie at residues 53–113 and 166–186; these read DKKI…ISQT and LKITEERRREFRKYIEKLMEE. The disordered stretch occupies residues 206 to 237; that stretch reads NDKTQKAVLTEEIDAPEQKQDEQQEEQDDFFE. The span at 228–237 shows a compositional bias: acidic residues; the sequence is QQEEQDDFFE.

This sequence belongs to the EFG1 family.

Its subcellular location is the nucleus. It is found in the nucleolus. Involved in rRNA processing. The chain is rRNA-processing protein EFG1 from Candida albicans (strain SC5314 / ATCC MYA-2876) (Yeast).